The sequence spans 364 residues: F-box/LRR-repeat protein At1g55660 (364 aa).

The F-box domain maps to 52 to 98; it reads MDKISQLPDELLVKVLSFLSTKDAVSTSILSMRWKSLWMWLPKLEYN. 6 LRR repeats span residues 158–179, 185–206, 207–228, 233–254, 256–277, and 279–300; these read NVRE…LPKS, SIVI…VCLP, SLKT…HRLL, VLED…SVIV, SLQR…KMNS, and SLKY…ESDS.

This Arabidopsis thaliana (Mouse-ear cress) protein is F-box/LRR-repeat protein At1g55660.